Here is a 97-residue protein sequence, read N- to C-terminus: Large ribosomal subunit protein bL31B (97 aa).

It belongs to the bacterial ribosomal protein bL31 family. Type B subfamily. Part of the 50S ribosomal subunit.

The chain is Large ribosomal subunit protein bL31B (rpmE2) from Mycolicibacterium paratuberculosis (strain ATCC BAA-968 / K-10) (Mycobacterium paratuberculosis).